The sequence spans 124 residues: Ribonuclease pancreatic (124 aa).

Residues 1–24 form a disordered region; sequence KESSAMKFQRQHMDSSGSPSTNAN. Residues lysine 7 and arginine 10 each coordinate substrate. Catalysis depends on histidine 12, which acts as the Proton acceptor. The span at 14–24 shows a compositional bias: polar residues; sequence DSSGSPSTNAN. Cystine bridges form between cysteine 26–cysteine 84, cysteine 40–cysteine 95, cysteine 58–cysteine 110, and cysteine 65–cysteine 72. The N-linked (GlcNAc...) asparagine glycan is linked to asparagine 34. Residues 41–45, lysine 66, and arginine 85 contribute to the substrate site; that span reads KPVNT. Residue histidine 119 is the Proton donor of the active site.

It belongs to the pancreatic ribonuclease family. As to quaternary structure, monomer. Interacts with and forms tight 1:1 complexes with RNH1. Dimerization of two such complexes may occur. Interaction with RNH1 inhibits this protein. As to expression, pancreas.

The protein resides in the secreted. It carries out the reaction an [RNA] containing cytidine + H2O = an [RNA]-3'-cytidine-3'-phosphate + a 5'-hydroxy-ribonucleotide-3'-[RNA].. It catalyses the reaction an [RNA] containing uridine + H2O = an [RNA]-3'-uridine-3'-phosphate + a 5'-hydroxy-ribonucleotide-3'-[RNA].. In terms of biological role, endonuclease that catalyzes the cleavage of RNA on the 3' side of pyrimidine nucleotides. Acts on single-stranded and double-stranded RNA. The chain is Ribonuclease pancreatic (RNASE1) from Chinchilla chinchilla (Short-tailed chinchilla).